The following is a 485-amino-acid chain: Glutamate--tRNA ligase (485 aa).

The 'HIGH' region signature appears at 12-22; that stretch reads PSPTGYMHVGN. Zn(2+) contacts are provided by C109, C111, C136, and H138. The 'KMSKS' region motif lies at 253-257; that stretch reads KLSKR. Residue K256 participates in ATP binding.

The protein belongs to the class-I aminoacyl-tRNA synthetase family. Glutamate--tRNA ligase type 1 subfamily. Monomer. Zn(2+) serves as cofactor.

The protein resides in the cytoplasm. The enzyme catalyses tRNA(Glu) + L-glutamate + ATP = L-glutamyl-tRNA(Glu) + AMP + diphosphate. Catalyzes the attachment of glutamate to tRNA(Glu) in a two-step reaction: glutamate is first activated by ATP to form Glu-AMP and then transferred to the acceptor end of tRNA(Glu). This is Glutamate--tRNA ligase from Clostridium botulinum (strain Eklund 17B / Type B).